The chain runs to 89 residues: Small ribosomal subunit protein uS15 (89 aa).

The protein belongs to the universal ribosomal protein uS15 family. Part of the 30S ribosomal subunit. Forms a bridge to the 50S subunit in the 70S ribosome, contacting the 23S rRNA.

Its function is as follows. One of the primary rRNA binding proteins, it binds directly to 16S rRNA where it helps nucleate assembly of the platform of the 30S subunit by binding and bridging several RNA helices of the 16S rRNA. Functionally, forms an intersubunit bridge (bridge B4) with the 23S rRNA of the 50S subunit in the ribosome. This Agrobacterium fabrum (strain C58 / ATCC 33970) (Agrobacterium tumefaciens (strain C58)) protein is Small ribosomal subunit protein uS15.